The primary structure comprises 492 residues: 2,3-bisphosphoglycerate-independent phosphoglycerate mutase (492 aa).

The Mn(2+) site is built by Asp-11 and Ser-61. The Phosphoserine intermediate role is filled by Ser-61. Residues His-118, Arg-147–Asp-148, Arg-178, Arg-184, Arg-248–Arg-251, and Lys-320 each bind substrate. Residues Asp-386, His-390, Asp-427, His-428, and His-445 each contribute to the Mn(2+) site.

It belongs to the BPG-independent phosphoglycerate mutase family. Monomer. It depends on Mn(2+) as a cofactor.

It carries out the reaction (2R)-2-phosphoglycerate = (2R)-3-phosphoglycerate. It functions in the pathway carbohydrate degradation; glycolysis; pyruvate from D-glyceraldehyde 3-phosphate: step 3/5. In terms of biological role, catalyzes the interconversion of 2-phosphoglycerate and 3-phosphoglycerate. The polypeptide is 2,3-bisphosphoglycerate-independent phosphoglycerate mutase (Campylobacter jejuni subsp. jejuni serotype O:6 (strain 81116 / NCTC 11828)).